We begin with the raw amino-acid sequence, 948 residues long: UvrABC system protein A (948 aa).

Residue 42–49 (GLSGSGKS) coordinates ATP. The segment at 262–289 (CPVCSYSLPELEPRLFSFNNPMGSCPTC) adopts a C4-type zinc-finger fold. 2 ABC transporter domains span residues 319–596 (WDKR…ENSV) and 616–945 (VNPG…KYLK). Position 649 to 656 (649 to 656 (GVSGSGKS)) interacts with ATP. The C4-type zinc-finger motif lies at 748–774 (CEACQGDGVIKVEMHFLPDVYVPCEVC).

It belongs to the ABC transporter superfamily. UvrA family. Forms a heterotetramer with UvrB during the search for lesions.

It is found in the cytoplasm. Functionally, the UvrABC repair system catalyzes the recognition and processing of DNA lesions. UvrA is an ATPase and a DNA-binding protein. A damage recognition complex composed of 2 UvrA and 2 UvrB subunits scans DNA for abnormalities. When the presence of a lesion has been verified by UvrB, the UvrA molecules dissociate. The protein is UvrABC system protein A of Neisseria meningitidis serogroup A / serotype 4A (strain DSM 15465 / Z2491).